A 40-amino-acid polypeptide reads, in one-letter code: Snaclec LmrLEC-1 (40 aa).

Cysteine 2 and cysteine 13 are joined by a disulfide.

This sequence belongs to the snaclec family. In terms of assembly, dimer (non-covalently linked) of heterodimers of subunits alpha and beta (disulfide-linked). As to expression, expressed by the venom gland.

It is found in the secreted. Functionally, interferes with one step of hemostasis (modulation of platelet aggregation, or coagulation cascade, for example). This Lachesis muta rhombeata (Bushmaster) protein is Snaclec LmrLEC-1.